The following is a 359-amino-acid chain: 3-dehydroquinate synthase (359 aa).

NAD(+) is bound by residues 70–75, 105–109, 129–130, Lys-142, Lys-151, and 169–172; these read DGEQYK, GVIGD, TT, and FYKT. Residues Glu-184, His-247, and His-264 each coordinate Zn(2+).

The protein belongs to the sugar phosphate cyclases superfamily. Dehydroquinate synthase family. Requires Co(2+) as cofactor. Zn(2+) serves as cofactor. The cofactor is NAD(+).

The protein resides in the cytoplasm. It carries out the reaction 7-phospho-2-dehydro-3-deoxy-D-arabino-heptonate = 3-dehydroquinate + phosphate. It participates in metabolic intermediate biosynthesis; chorismate biosynthesis; chorismate from D-erythrose 4-phosphate and phosphoenolpyruvate: step 2/7. Its function is as follows. Catalyzes the conversion of 3-deoxy-D-arabino-heptulosonate 7-phosphate (DAHP) to dehydroquinate (DHQ). The chain is 3-dehydroquinate synthase from Francisella tularensis subsp. holarctica (strain FTNF002-00 / FTA).